The chain runs to 354 residues: VSHVTVPSEGVMPSPLSLCRYLPRELSPSVDSRSCSIPLVAPRKAGKLFLGTTPPRAPGLPRRLAWFSIDWEQVCLMHRLGSGGFGSVYKATYHGVPVAIKQVNKCTEDLRASQRSFWAELNIAGLRHDNIVRVVAASTRTPEDSNSLGTIIMEFGGNVTLHQVIYDATRSPEPLSCRKQLSLGKCLKYSLDVVNGLLFLHSQSILHLDLKPANILISEQDVCKISDFGCSQKLQVLRGRQASPPHIGGTYTHQAPEILKGEIATPKADIYSFGITLWQMTTREVPYSGEPQYVQYAVVAYNLRPSLAGAVFTASLTGKALQNIIQSCWEARGLQRPSAELLQRDLKAFRGTLG.

One can recognise a Protein kinase domain in the interval 74–350 (VCLMHRLGSG…LLQRDLKAFR (277 aa)). ATP is bound by residues 80 to 88 (LGSGGFGSV) and Lys-101. The active-site Proton acceptor is the Asp-209.

This sequence belongs to the protein kinase superfamily. Ser/Thr protein kinase family.

The catalysed reaction is L-seryl-[protein] + ATP = O-phospho-L-seryl-[protein] + ADP + H(+). It catalyses the reaction L-threonyl-[protein] + ATP = O-phospho-L-threonyl-[protein] + ADP + H(+). The protein is Serine/threonine-protein kinase-transforming protein mos (V-MOS) of Moloney murine sarcoma virus (strain ts110) (MoMSV).